Consider the following 124-residue polypeptide: Phosphoribosyl-AMP cyclohydrolase (124 aa).

Residue Asp-82 participates in Mg(2+) binding. Residue Cys-83 participates in Zn(2+) binding. Residues Asp-84 and Asp-86 each contribute to the Mg(2+) site. The Zn(2+) site is built by Cys-99 and Cys-106.

The protein belongs to the PRA-CH family. Homodimer. Mg(2+) serves as cofactor. It depends on Zn(2+) as a cofactor.

The protein resides in the cytoplasm. It carries out the reaction 1-(5-phospho-beta-D-ribosyl)-5'-AMP + H2O = 1-(5-phospho-beta-D-ribosyl)-5-[(5-phospho-beta-D-ribosylamino)methylideneamino]imidazole-4-carboxamide. It functions in the pathway amino-acid biosynthesis; L-histidine biosynthesis; L-histidine from 5-phospho-alpha-D-ribose 1-diphosphate: step 3/9. Its function is as follows. Catalyzes the hydrolysis of the adenine ring of phosphoribosyl-AMP. This Rhizorhabdus wittichii (strain DSM 6014 / CCUG 31198 / JCM 15750 / NBRC 105917 / EY 4224 / RW1) (Sphingomonas wittichii) protein is Phosphoribosyl-AMP cyclohydrolase.